We begin with the raw amino-acid sequence, 425 residues long: MKLQKPKGTQDILPGEAAKWQYLENVARETFKKYHYGEIRTPMFEHYEVISRSVGDTTDIVTKEMYDFHDKGDRHITLRPEGTAPVVRSFVENKLFAPEVQKPVKLYYIGSMFRYERPQAGRLREFHQIGVECFGSANPASDVETIAMASHLFETLGIKDMTLHLNSLGNPSSRAAYRQALIDYLTPMREQLSKDSQRRLDENPLRVLDSKEVEDKVAVENAPSILDYLDEESKAHFEAVQEMLTTLNIPFVIDTNMVRGLDYYNHTIFEFMAKVEGSDLTICAGGRYDGLVSYFDGPETPGFGFGLGLERLLLILEKQGITLPIEEPMDVYLAVLGEAANSKALALVQAIRKQGFTAERDYLGRKIKAQFKSADSFNAKTIITLGESEVETGKVIIKNNQTREEMEVSLEEITSNFATIMEKLV.

It belongs to the class-II aminoacyl-tRNA synthetase family. In terms of assembly, homodimer.

Its subcellular location is the cytoplasm. The catalysed reaction is tRNA(His) + L-histidine + ATP = L-histidyl-tRNA(His) + AMP + diphosphate + H(+). The protein is Histidine--tRNA ligase of Streptococcus uberis (strain ATCC BAA-854 / 0140J).